A 342-amino-acid polypeptide reads, in one-letter code: tRNA-specific 2-thiouridylase MnmA 2 (342 aa).

Cys-62 acts as the Nucleophile in catalysis. Residues Cys-62 and Cys-160 are joined by a disulfide bond. Gly-86 is an ATP binding site. An interaction with tRNA region spans residues 110 to 112; that stretch reads KDQ. The Cysteine persulfide intermediate role is filled by Cys-160. The tract at residues 268–269 is interaction with tRNA; that stretch reads RY.

Belongs to the MnmA/TRMU family.

It is found in the cytoplasm. It catalyses the reaction S-sulfanyl-L-cysteinyl-[protein] + uridine(34) in tRNA + AH2 + ATP = 2-thiouridine(34) in tRNA + L-cysteinyl-[protein] + A + AMP + diphosphate + H(+). In terms of biological role, catalyzes the 2-thiolation of uridine at the wobble position (U34) of tRNA, leading to the formation of s(2)U34. The chain is tRNA-specific 2-thiouridylase MnmA 2 from Syntrophus aciditrophicus (strain SB).